We begin with the raw amino-acid sequence, 194 residues long: Adenylate kinase (194 aa).

Position 10 to 15 (10 to 15 (GAGKGT)) interacts with ATP. Positions 30–59 (STGDMLRAAVKAETEIGKKAKAVMDAGELV) are NMP. Residues Thr31, Arg36, 57–59 (ELV), 85–88 (GYPR), and Gln92 contribute to the AMP site. Positions 126 to 142 (KRAEDAQAAGQPVRRDD) are LID. Position 127 (Arg127) interacts with ATP. AMP is bound by residues Arg139 and Arg150. ATP is bound at residue Ala178.

This sequence belongs to the adenylate kinase family. Monomer.

The protein localises to the cytoplasm. The enzyme catalyses AMP + ATP = 2 ADP. It participates in purine metabolism; AMP biosynthesis via salvage pathway; AMP from ADP: step 1/1. Catalyzes the reversible transfer of the terminal phosphate group between ATP and AMP. Plays an important role in cellular energy homeostasis and in adenine nucleotide metabolism. In Chelativorans sp. (strain BNC1), this protein is Adenylate kinase.